A 256-amino-acid polypeptide reads, in one-letter code: Stanniocalcin (256 aa).

The first 18 residues, 1 to 18 (MLAKFGLCAVFLVLGTAA), serve as a signal peptide directing secretion. Positions 19–33 (TFDTDPEEASPRRAR) are excised as a propeptide. The N-linked (GlcNAc...) asparagine glycan is linked to asparagine 62. The tract at residues 204–241 (QGSNQGPNSAPAGWRWPMGSPPSFKIQPSMRGRDPTHL) is disordered.

This sequence belongs to the stanniocalcin family. Homodimer; disulfide-linked. In terms of tissue distribution, produced and secreted by the corpuscles of Stannius.

Its subcellular location is the secreted. Its function is as follows. Its primary function is the prevention of hypercalcemia. Upon release into the circulation, it lowers calcium transport by the gills, thereby reducing its rate of influx from the environment into the extracellular compartment. STC also stimulates phosphate reabsorption by renal proximal tubules. The consequence of this action is increased levels of plasma phosphate, which combines with excess calcium and promotes its disposal into bone and scales. In Oncorhynchus mykiss (Rainbow trout), this protein is Stanniocalcin (stc).